Here is a 412-residue protein sequence, read N- to C-terminus: Putative gustatory receptor 58c (412 aa).

A run of 2 helical transmembrane segments spans residues 39–59 (VVYC…ALFV) and 72–92 (MFGV…LFLM). Residue N158 is glycosylated (N-linked (GlcNAc...) asparagine). A helical transmembrane segment spans residues 173–193 (IVYALIMILLMSYVDMTVYMV). A glycan (N-linked (GlcNAc...) asparagine) is linked at N203. The next 3 helical transmembrane spans lie at 224–241 (IPRE…RKLW), 262–282 (VLFN…RLWI), and 296–316 (ILYA…FSIF). Residues N337, N386, and N391 are each glycosylated (N-linked (GlcNAc...) asparagine).

It belongs to the insect chemoreceptor superfamily. Gustatory receptor (GR) family. Gr10a subfamily.

The protein localises to the cell membrane. Functionally, probable gustatory receptor which mediates acceptance or avoidance behavior, depending on its substrates. This Drosophila melanogaster (Fruit fly) protein is Putative gustatory receptor 58c (Gr58c).